Here is a 256-residue protein sequence, read N- to C-terminus: Putative transposase for insertion sequence element IS112 (256 aa).

The protein belongs to the transposase 11 family.

Its function is as follows. Involved in the transposition of the insertion sequence IS112 which inactivates the SalI restriction-modification system. This is Putative transposase for insertion sequence element IS112 from Streptomyces albus G.